Consider the following 54-residue polypeptide: UPF0057 membrane protein ssr1169 (54 aa).

Transmembrane regions (helical) follow at residues 3-23 and 31-51; these read IVKIICAILLPPLGVFLQVGI and LLLTIFGLYILGLVHAIWVIA.

It belongs to the UPF0057 (PMP3) family.

The protein resides in the cell membrane. This chain is UPF0057 membrane protein ssr1169, found in Synechocystis sp. (strain ATCC 27184 / PCC 6803 / Kazusa).